Here is a 160-residue protein sequence, read N- to C-terminus: MLALYQPDIPQNCGTMLRLCACLGVEAAIIEPAGFPVSDRHFRRAGMDYLDQVALSRHVSFTAFRAWQIETGRRLVLLSTKASQPYTDFTFRPDDILLMGRESAGVPEAVHASADARVVIPLRPPMRSLNVAVAAAMVLGEALRQVGALAKVMDAPRASL.

S-adenosyl-L-methionine-binding residues include leucine 78, glycine 100, isoleucine 120, and serine 128.

It belongs to the class IV-like SAM-binding methyltransferase superfamily. RNA methyltransferase TrmH family. TrmL subfamily. Homodimer.

The protein localises to the cytoplasm. It catalyses the reaction cytidine(34) in tRNA + S-adenosyl-L-methionine = 2'-O-methylcytidine(34) in tRNA + S-adenosyl-L-homocysteine + H(+). It carries out the reaction 5-carboxymethylaminomethyluridine(34) in tRNA(Leu) + S-adenosyl-L-methionine = 5-carboxymethylaminomethyl-2'-O-methyluridine(34) in tRNA(Leu) + S-adenosyl-L-homocysteine + H(+). In terms of biological role, methylates the ribose at the nucleotide 34 wobble position in the two leucyl isoacceptors tRNA(Leu)(CmAA) and tRNA(Leu)(cmnm5UmAA). Catalyzes the methyl transfer from S-adenosyl-L-methionine to the 2'-OH of the wobble nucleotide. The chain is tRNA (cytidine(34)-2'-O)-methyltransferase from Beijerinckia indica subsp. indica (strain ATCC 9039 / DSM 1715 / NCIMB 8712).